The primary structure comprises 3241 residues: PHD finger protein rhinoceros (3241 aa).

A compositionally biased stretch (basic residues) spans 1–16; that stretch reads MSQRGKRGNQQHHQSH. Residues 1-126 form a disordered region; sequence MSQRGKRGNQ…GASSSSSWQA (126 aa). Composition is skewed to low complexity over residues 42–55 and 90–126; these read PPNG…AEVT and RAAA…SWQA. The PHD-type 1 zinc finger occupies 312–362; the sequence is NVICDVCRSPDSEEANEMVFCDNCNICVHQACYGITAIPSGQWLCRTCSMG. A C2HC pre-PHD-type zinc finger spans residues 364–398; the sequence is KPDCVLCPNKGGAMKSNKSGKHWAHVSCALWIPEV. A PHD-type 2 zinc finger spans residues 422–481; sequence LICVLCRKRVGSCIQCSVKPCKTAYHVTCAFQHGLEMRAIIEEGNAEDGVKLRSYCQKHS. Disordered regions lie at residues 482 to 501, 508 to 554, 737 to 1266, 1279 to 1483, 1500 to 1613, and 1632 to 1746; these read MSKG…ASVA, NRYG…ARAQ, SGKQ…VATP, PQRQ…STKV, PKTN…SETR, and NLGA…QHLL. The span at 540 to 554 shows a compositional bias: basic and acidic residues; that stretch reads KTELTSEERNQARAQ. Positions 762 to 777 are enriched in polar residues; it reads KKLNNGILSSRTSSPE. The segment covering 807–874 has biased composition (low complexity); that stretch reads KSSAAAATST…SGSSSAGSGV (68 aa). Positions 931–943 are enriched in basic and acidic residues; it reads ERCRNRQEPERGA. Polar residues predominate over residues 949 to 965; it reads QSKSVPNRSQASRSKPT. A compositionally biased stretch (acidic residues) spans 995-1007; sequence DADESVSSDESEE. Positions 1019–1031 are enriched in low complexity; the sequence is STTTSGLATTGSA. The segment covering 1060 to 1075 has biased composition (polar residues); it reads TVESNVSDSQNQQTIR. Residues 1087–1104 are compositionally biased toward low complexity; that stretch reads TAATTSSTSQAASSTSKA. 2 stretches are compositionally biased toward polar residues: residues 1117–1126 and 1151–1163; these read IGNSTKTKPN and NMRS…TLQP. Positions 1184 to 1211 are enriched in basic and acidic residues; sequence KVKDSSSRVSNEADKSSLEKVRPKEHLQ. Residues 1313–1327 are compositionally biased toward polar residues; that stretch reads VTSATISGSGSSVPA. Position 1346 is a phosphothreonine (T1346). A Phosphoserine modification is found at S1352. Residue T1364 is modified to Phosphothreonine. A compositionally biased stretch (low complexity) spans 1382–1426; sequence SSSSSGDSESSSSSSSSGSSSSSGGSDSDSESQASNSENPSSREP. T1456 is subject to Phosphothreonine. The segment covering 1463–1483 has biased composition (polar residues); it reads NVLNIPSTRSRQNSTTKSTKV. The segment covering 1541-1558 has biased composition (basic and acidic residues); the sequence is SPEKTVSRCKSRAEESPK. The span at 1576 to 1594 shows a compositional bias: polar residues; the sequence is KGTSSLDKLLNKKQQQMNH. The span at 1599–1608 shows a compositional bias: pro residues; it reads TPPPISPTPP. The span at 1664 to 1675 shows a compositional bias: polar residues; the sequence is TAPTRTQLSASA. Residues 1688–1699 are compositionally biased toward pro residues; the sequence is PAAPLPASPTPT. A compositionally biased stretch (basic residues) spans 1717–1731; it reads RRMRWRSRRRRRRRS. 2 coiled-coil regions span residues 1741–1770 and 1893–1925; these read HTQH…ASKY and SEED…KEAV. 11 disordered regions span residues 2037–2061, 2124–2148, 2203–2227, 2346–2454, 2598–2629, 2667–2691, 2768–2811, 2832–2911, 2964–3015, 3042–3169, and 3184–3241; these read LEKS…GQPA, AERR…PVVT, NNTN…TPNN, TPPV…GGVT, ATGT…PAPN, SEEV…ARSQ, NDDS…NSSS, GAGA…SVDE, NKRG…TTTM, KAET…EAAM, and VNVG…CEVR. The span at 2359–2381 shows a compositional bias: polar residues; it reads KRTSVSGSNLSKKQTHKSPQLPQ. The span at 2392–2402 shows a compositional bias: pro residues; it reads PLQPPTPPAPV. Over residues 2430-2439 the composition is skewed to gly residues; the sequence is GSGGSGAPGR. Polar residues-rich tracts occupy residues 2598 to 2611 and 2673 to 2689; these read ATGT…QHSG and DSDS…SDAR. Over residues 2855-2865 the composition is skewed to polar residues; the sequence is NNDNNGKTGAA. Basic and acidic residues predominate over residues 2876 to 2887; that stretch reads KTLESSEDDHQA. Residues S2880 and S2881 each carry the phosphoserine modification. A compositionally biased stretch (polar residues) spans 2899 to 2911; it reads ANETPSGVSSVDE. Residues 2964 to 2974 are compositionally biased toward basic and acidic residues; that stretch reads NKRGVVVKDGE. Basic residues predominate over residues 2984-3002; sequence KRPKSSKPKKEKKEKKRQK. The span at 3003 to 3015 shows a compositional bias: low complexity; that stretch reads QQQLILSSSTTTM. Phosphoserine occurs at positions 3104 and 3110. Composition is skewed to polar residues over residues 3115-3130 and 3184-3197; these read LLNS…NTSP and VNVG…NSLP. Over residues 3198–3218 the composition is skewed to low complexity; the sequence is SASGTGSASSNSCNSNSINNN. The segment covering 3219 to 3230 has biased composition (gly residues); it reads GSGGGRASGEGG.

The protein belongs to the JADE family.

Its subcellular location is the nucleus. In terms of biological role, may function as a negative regulator of the EGFR/Ras/MAPK signaling pathway during eye development. This is PHD finger protein rhinoceros (rno) from Drosophila melanogaster (Fruit fly).